Here is a 417-residue protein sequence, read N- to C-terminus: Oxidoreductase phnG (417 aa).

6-hydroxy-FAD-binding positions include 16–20, Arg-61, and Asp-317; that span reads GGSYA.

The protein belongs to the FAD-dependent oxidoreductase family. Requires 6-hydroxy-FAD as cofactor.

It carries out the reaction deoxyherqueinone + NADPH + O2 + H(+) = herqueinone + NADP(+) + H2O. It participates in secondary metabolite biosynthesis. Functionally, oxidoreductase; part of the gene cluster that mediates the biosynthesis of phenalenones such as herqueinone, compounds that have been reported to treat tumors, bacterial infections and/or mycoses, and rheumatic diseases. The non-reducing polyketide synthase phnA synthesizes the heptaketide backbone and cyclizes it into the angular, hemiketal-containing naphtho-gamma-pyrone prephenalenone. The product template (PT) domain of phnA catalyzes only the C4-C9 aldol condensation, which is unprecedented among known PT domains. The transformation of prephenalenone to phenalenones requires an FAD-dependent monooxygenase phnB, which catalyzes the C2 aromatic hydroxylation of prephenalenone and ring opening of the gamma-pyrone ring simultaneously. Subsequent intramolecular deprotonation of C3 phenolic oxygen accelerates phenalenone ring closure to yield the tricyclic phenalenone core with a C2 hydroxylation. The prenyltransferase phnF further catalyzes reverse C-prenylation of phenalenone by direct electrophilic substitution at C6, or possibly via first a forward O-prenylation of a neighboring phenol in phenalenone, followed by a Claisen rearrangement. The hydroalkoxylation enzyme phnH catalyzes the 5-exo-trig cyclization via acid catalysis after the spontaneous deprotonation of 7-OH, which leads to the formation of the dihydrobenzofuran atrovenetin. Atrovenetin is further converted to deoxyherqueinone by the O-methyltransferase phnC which can methylate C2-OH to stabilize the northern portion of the phenalenone core. Finally, the oxidoreductase phnG converts deoxyherqueinone to herqueinone via C6 hydroxylation. In Penicillium herquei, this protein is Oxidoreductase phnG.